We begin with the raw amino-acid sequence, 209 residues long: MGAPNHVNFVRRRIGLTGGIATGKSTVADYLRDRYQLPILDADRYAREVVAVGSPVLQVIRDRYGASILLADGQLDRQKLGSIIFADPAERQWLEQQTHPAIRACFERDLAQLESDPIVVLVIPLLFEAGLQDWVEQIWVVACPLEQQRDRLIHRDRLTPAAAEQRLAAQWPIAQKCEHADIVIDNSRDRTFTFQQVDQAIEKVVVAEN.

Residues 13 to 209 (RIGLTGGIAT…AIEKVVVAEN (197 aa)) form the DPCK domain. 21–26 (ATGKST) serves as a coordination point for ATP.

The protein belongs to the CoaE family.

It is found in the cytoplasm. The enzyme catalyses 3'-dephospho-CoA + ATP = ADP + CoA + H(+). The protein operates within cofactor biosynthesis; coenzyme A biosynthesis; CoA from (R)-pantothenate: step 5/5. Its function is as follows. Catalyzes the phosphorylation of the 3'-hydroxyl group of dephosphocoenzyme A to form coenzyme A. The polypeptide is Dephospho-CoA kinase (Synechococcus elongatus (strain ATCC 33912 / PCC 7942 / FACHB-805) (Anacystis nidulans R2)).